The primary structure comprises 537 residues: Phosphoenolpyruvate carboxykinase (ATP) (537 aa).

Substrate contacts are provided by arginine 61, tyrosine 195, and lysine 201. ATP is bound by residues lysine 201, histidine 220, and 236–244 (GLSGTGKTT). Positions 201 and 220 each coordinate Mn(2+). Mn(2+) is bound at residue aspartate 257. Glutamate 285 serves as a coordination point for ATP. A compositionally biased stretch (basic and acidic residues) spans 312 to 321 (DFNDGSKTEN). The disordered stretch occupies residues 312–339 (DFNDGSKTENTRSAYPLESIPNASPTGR). Substrate is bound at residue arginine 323. Arginine 323 and threonine 448 together coordinate ATP.

This sequence belongs to the phosphoenolpyruvate carboxykinase (ATP) family. The cofactor is Mn(2+).

It is found in the cytoplasm. It carries out the reaction oxaloacetate + ATP = phosphoenolpyruvate + ADP + CO2. Its pathway is carbohydrate biosynthesis; gluconeogenesis. In terms of biological role, involved in the gluconeogenesis. Catalyzes the conversion of oxaloacetate (OAA) to phosphoenolpyruvate (PEP) through direct phosphoryl transfer between the nucleoside triphosphate and OAA. The polypeptide is Phosphoenolpyruvate carboxykinase (ATP) (Rhodopseudomonas palustris (strain BisB18)).